The primary structure comprises 282 residues: Putative 23S rRNA (guanine-N(1)-)-methyltransferase YxjB (282 aa).

Zn(2+) contacts are provided by cysteine 12, cysteine 15, cysteine 29, and histidine 34. 103–104 (EG) provides a ligand contact to S-adenosyl-L-methionine.

Belongs to the methyltransferase superfamily. RlmA family.

This Bacillus subtilis (strain 168) protein is Putative 23S rRNA (guanine-N(1)-)-methyltransferase YxjB (yxjB).